Here is a 378-residue protein sequence, read N- to C-terminus: UDP-N-acetylenolpyruvoylglucosamine reductase (378 aa).

An FAD-binding PCMH-type domain is found at 15–185 (VGGTPERLLE…LSVDLELADH (171 aa)). Arg-163 is an active-site residue. The active-site Proton donor is the Ser-248. Residue Glu-370 is part of the active site.

This sequence belongs to the MurB family. FAD is required as a cofactor.

The protein localises to the cytoplasm. It carries out the reaction UDP-N-acetyl-alpha-D-muramate + NADP(+) = UDP-N-acetyl-3-O-(1-carboxyvinyl)-alpha-D-glucosamine + NADPH + H(+). It participates in cell wall biogenesis; peptidoglycan biosynthesis. Its function is as follows. Cell wall formation. The chain is UDP-N-acetylenolpyruvoylglucosamine reductase from Leifsonia xyli subsp. xyli (strain CTCB07).